The sequence spans 262 residues: Small ribosomal subunit protein uS2 (262 aa).

It belongs to the universal ribosomal protein uS2 family.

The protein is Small ribosomal subunit protein uS2 of Rhodospirillum rubrum (strain ATCC 11170 / ATH 1.1.1 / DSM 467 / LMG 4362 / NCIMB 8255 / S1).